A 545-amino-acid polypeptide reads, in one-letter code: Aclacinomycin-N/aclacinomycin-A oxidase (545 aa).

The tat-type signal signal peptide spans methionine 1–alanine 43. Residues phenylalanine 76–alanine 256 form the FAD-binding PCMH-type domain. Positions histidine 113–cysteine 173 form a cross-link, 6-(S-cysteinyl)-8alpha-(pros-histidyl)-FAD (His-Cys). The active-site Proton acceptor is tyrosine 421. Threonine 451 is a binding site for aclacinomycin Y. Asparagine 492 lines the FAD pocket. Tyrosine 493 (proton acceptor) is an active-site residue. Residue tyrosine 493 coordinates aclacinomycin Y.

This sequence belongs to the oxygen-dependent FAD-linked oxidoreductase family. As to quaternary structure, homotetramer; dimer of dimers. FAD serves as cofactor. Predicted to be exported by the Tat system. The position of the signal peptide cleavage has been experimentally proven. Post-translationally, the FAD cofactor is bound via a bicovalent 6-S-cysteinyl, 8alpha-N1-histidyl FAD linkage.

The catalysed reaction is aclacinomycin N + O2 = aclacinomycin A + H2O2. It carries out the reaction aclacinomycin A + O2 = aclacinomycin Y + H2O2. Its activity is regulated as follows. Inhibited by ascorbic acid and iron ion. Functionally, involved in the modification of the terminal sugar residues in the last two steps in the biosynthesis of polyketide antibiotics of the aclacinomycin group. In the first reaction, it catalyzes the oxidation of the hydroxyl group at carbon C4 of the L-rhodinose terminal sugar moiety of aclacinomycin N (AclN) to a keto group, modifying the sugar to cinerulose A and generating aclacinomycin A (AclA). In the second reaction, it catalyzes the elimination of two hydrogen atoms from cinerulose A, leading to a double bond between carbon atoms C2 and C3 and the generation of the L-aculose terminal sugar moiety of aclacinomycin Y (AclY). It can also use aclacinomycin analogs, epsilon-pyrromycinone glycosides, rhodirubins (A, B, C and E) and all triglycosides containing L-cinerulose, L-rhodinose or 2-deoxy-L-fucose as terminal sugar. The polypeptide is Aclacinomycin-N/aclacinomycin-A oxidase (Streptomyces galilaeus).